The chain runs to 345 residues: NADH-quinone oxidoreductase subunit 8 (345 aa).

A run of 8 helical transmembrane segments spans residues 15 to 35 (MLLQGLAVIAFVMGSLIFMVY), 82 to 102 (FVYFLAPFLSMMLALFAFVVI), 115 to 135 (VGILFIFAASSLEVYGVIMGG), 161 to 181 (LGLIIIGIIISTGSMNLTAIV), 190 to 210 (LLNWYWLPHLPMVVLFFVSAL), 240 to 262 (YLLFMAGEYIAMYLMCALLSLLF), 278 to 298 (WWMVIKMWFWFYMFAMVKAIV), and 309 to 329 (IGWKVFLPLSLGWVVLVAILA).

Belongs to the complex I subunit 1 family. NDH-1 is composed of at least 14 different subunits, Nqo1 to Nqo14. The complex has a L-shaped structure, with the hydrophobic arm (subunits Nqo7, Nqo8, Nqo10 to Nqo14) embedded in the inner membrane and the hydrophilic peripheral arm (subunits Nqo1 to Nqo6, Nqo9) protruding into the bacterial cytoplasm. The hydrophilic domain contains all the redox centers.

The protein localises to the cell inner membrane. The enzyme catalyses a quinone + NADH + 5 H(+)(in) = a quinol + NAD(+) + 4 H(+)(out). In terms of biological role, NDH-1 shuttles electrons from NADH, via FMN and iron-sulfur (Fe-S) centers, to quinones in the respiratory chain. The immediate electron acceptor for the enzyme in this species is believed to be ubiquinone. Couples the redox reaction to proton translocation (for every two electrons transferred, four hydrogen ions are translocated across the cytoplasmic membrane), and thus conserves the redox energy in a proton gradient. The polypeptide is NADH-quinone oxidoreductase subunit 8 (Paracoccus denitrificans).